Consider the following 113-residue polypeptide: Iron-sulfur cluster insertion protein ErpA (113 aa).

Iron-sulfur cluster is bound by residues Cys41, Cys105, and Cys107.

This sequence belongs to the HesB/IscA family. As to quaternary structure, homodimer. The cofactor is iron-sulfur cluster.

In terms of biological role, required for insertion of 4Fe-4S clusters for at least IspG. This chain is Iron-sulfur cluster insertion protein ErpA, found in Vibrio vulnificus (strain YJ016).